Reading from the N-terminus, the 498-residue chain is Protein disulfide-isomerase (498 aa).

The signal sequence occupies residues 1–23 (MASFRGSIWYCIFVLSLIAVAIS). Thioredoxin domains are found at residues 24 to 143 (AAES…KQSG) and 339 to 484 (YLKA…KNRD). N-linked (GlcNAc...) asparagine glycosylation occurs at asparagine 41. Residues cysteine 61, cysteine 64, cysteine 406, and cysteine 409 each act as nucleophile in the active site. Intrachain disulfides connect cysteine 61-cysteine 64 and cysteine 406-cysteine 409. The Prevents secretion from ER motif lies at 495–498 (KDEL).

Belongs to the protein disulfide isomerase family.

It localises to the endoplasmic reticulum lumen. The catalysed reaction is Catalyzes the rearrangement of -S-S- bonds in proteins.. In terms of biological role, participates in the folding of proteins containing disulfide bonds, may be involved in glycosylation, prolyl hydroxylation and triglyceride transfer. The protein is Protein disulfide-isomerase of Ricinus communis (Castor bean).